The chain runs to 340 residues: Short-chain dehydrogenase/reductase prx1 (340 aa).

NADP(+) is bound by residues Ile-60, Lys-84, Asp-104, Asn-131, and Lys-162. Ser-184 serves as the catalytic Proton donor. NADP(+) is bound by residues Tyr-210 and Lys-214. Residue Tyr-210 is the Proton acceptor of the active site. Lys-214 functions as the Lowers pKa of active site Tyr in the catalytic mechanism.

This sequence belongs to the short-chain dehydrogenases/reductases (SDR) family.

It functions in the pathway sesquiterpene biosynthesis. Functionally, short-chain dehydrogenase/reductase; part of the gene cluster that mediates the biosynthesis of PR-toxin, a bicyclic sesquiterpene belonging to the eremophilane class and acting as a mycotoxin. The first step of the pathway is catalyzed by the aristolochene synthase which performs the cyclization of trans,trans-farnesyl diphosphate (FPP) to the bicyclic sesquiterpene aristolochene. Following the formation of aristolochene, the non-oxygenated aristolochene is converted to the trioxygenated intermediate eremofortin B, via 7-epi-neopetasone. This conversion appears to involve three enzymes, a hydroxysterol oxidase-like enzyme, the quinone-oxidase prx3 that forms the quinone-type-structure in the bicyclic nucleus of aristolochene with the C8-oxo group and the C-3 hydroxyl group, and the P450 monooxygenase ORF6 that introduces the epoxide at the double bond between carbons 1 and 2. No monoxy or dioxy-intermediates have been reported to be released to the broth, so these three early oxidative reactions may be coupled together. Eremofortin B is further oxidized by another P450 monooxygenase, that introduces a second epoxide between carbons 7 and 11 prior to acetylation to eremofortin A by the acetyltransferase ORF8. The second epoxidation may be performed by a second P450 monooxygenase. After the acetylation step, eremofortin A is converted to eremofortin C and then to PR-toxin. First the conversion of eremofortin A to eremofortin C proceeds by oxidation of the side chain of the molecule at C-12 and is catalyzed by the short-chain oxidoreductase prx1. The cytochrome P450 monooxygenase ORF6 is probably also involved in this step. The primary alcohol formed at C-12 is finally oxidized by the short-chain alcohol dehydrogenase prx4 that forms PR-toxin. The chain is Short-chain dehydrogenase/reductase prx1 from Penicillium roqueforti (strain FM164).